The sequence spans 715 residues: Staphylocoagulase (715 aa).

The first 26 residues, 1–26, serve as a signal peptide directing secretion; it reads MKKQIISLGALAVASSLFTWDNKADA. The segment covering 306-327 has biased composition (basic and acidic residues); it reads KYGESETKSPVVKEENKVEDPQ. 2 disordered regions span residues 306–348 and 430–470; these read KYGE…EETT and QGTE…FNKT. Over residues 431–443 the composition is skewed to polar residues; the sequence is GTESTLKGIQGES. Tandem repeats lie at residues 495–521, 522–548, 549–575, 576–602, 603–629, 630–656, 657–683, and 684–710. An 8 X 27 AA tandem repeats of A-R-P-[RT]-[FQY]-[NK]-K-[PA]-S-[EK]-T-N-A-Y-N-V-T-T-[NH]-[QAG]-[DN]-G-[TQ]-[VA]-[ST]-Y-G region spans residues 495 to 710; the sequence is ARPRFNKPSE…THADGTATYG (216 aa). Positions 674–697 are disordered; sequence THGNGQVSYGARPTYNKPSKTNAY.

The protein belongs to the staphylocoagulase family.

Staphylocoagulase is an extracellular protein which specifically forms a complex with human prothrombin. This complex named staphylothrombin can clot fibrinogen without any proteolytic cleavage of prothrombin. In Staphylococcus aureus, this protein is Staphylocoagulase.